Consider the following 484-residue polypeptide: Glutamyl-tRNA(Gln) amidotransferase subunit A (484 aa).

Catalysis depends on charge relay system residues lysine 77 and serine 152. The Acyl-ester intermediate role is filled by serine 176.

This sequence belongs to the amidase family. GatA subfamily. In terms of assembly, heterotrimer of A, B and C subunits.

It carries out the reaction L-glutamyl-tRNA(Gln) + L-glutamine + ATP + H2O = L-glutaminyl-tRNA(Gln) + L-glutamate + ADP + phosphate + H(+). Allows the formation of correctly charged Gln-tRNA(Gln) through the transamidation of misacylated Glu-tRNA(Gln) in organisms which lack glutaminyl-tRNA synthetase. The reaction takes place in the presence of glutamine and ATP through an activated gamma-phospho-Glu-tRNA(Gln). This is Glutamyl-tRNA(Gln) amidotransferase subunit A from Pseudomonas aeruginosa (strain LESB58).